The primary structure comprises 174 residues: Secreted protein A (174 aa).

A signal peptide spans 1-19 (MRLLITLFAIFALFNCSLA). Asn156 carries N-linked (GlcNAc...) asparagine glycosylation.

Belongs to the Sct family. In terms of processing, probably contains disulfide bonds.

The protein localises to the secreted. Its subcellular location is the extracellular vesicle. This is Secreted protein A (p17) from Dictyostelium discoideum (Social amoeba).